We begin with the raw amino-acid sequence, 67 residues long: Large ribosomal subunit protein bL35 (67 aa).

This sequence belongs to the bacterial ribosomal protein bL35 family.

The chain is Large ribosomal subunit protein bL35 from Dehalococcoides mccartyi (strain ATCC BAA-2100 / JCM 16839 / KCTC 5957 / BAV1).